The sequence spans 276 residues: Expansin-like A3 (276 aa).

The signal sequence occupies residues 1–28 (MAVLLSILSSSFLLLLAASSSSTPRASA). In terms of domain architecture, Expansin-like EG45 spans 52–158 (GGGCGYGAMA…RRIPCDYKDK (107 aa)). 2 N-linked (GlcNAc...) asparagine glycosylation sites follow: asparagine 115 and asparagine 159. In terms of domain architecture, Expansin-like CBD spans 172–255 (NNLVIKFLYQ…NWQPGQVYDT (84 aa)).

The protein belongs to the expansin family. Expansin-like A subfamily.

It is found in the secreted. This chain is Expansin-like A3 (EXLA3), found in Oryza sativa subsp. japonica (Rice).